The sequence spans 297 residues: Giardin subunit alpha-6 (297 aa).

Annexin repeat units lie at residues 3-72, 74-146, 153-222, and 226-295; these read TTVQ…AYLW, KPGD…HWIL, FDID…AAHY, and HPAR…ILWR.

It belongs to the annexin family. Giardin subunit alpha subfamily.

The protein localises to the cytoplasm. It is found in the cytoskeleton. In terms of biological role, giardins are involved in parasite attachment to the intestinal mucosa and in the cytoskeletal disassembly and reassembly that marks the transition from infectious trophozoite to transmissible cyst. They may interact with other cytoskeletal proteins such as microtubules in the microribbons or crossbridges, to maintain the integrity of the ventral disk. This Giardia intestinalis (Giardia lamblia) protein is Giardin subunit alpha-6.